Here is a 467-residue protein sequence, read N- to C-terminus: Fumarate hydratase class II (467 aa).

Substrate contacts are provided by residues 98–100 (SGT), Arg126, 129–132 (HPND), 139–141 (SSN), and Thr187. Residue His188 is the Proton donor/acceptor of the active site. The active site involves Ser318. Residues Ser319 and 324–326 (KVN) contribute to the substrate site.

This sequence belongs to the class-II fumarase/aspartase family. Fumarase subfamily. In terms of assembly, homotetramer.

It is found in the cytoplasm. The enzyme catalyses (S)-malate = fumarate + H2O. Its pathway is carbohydrate metabolism; tricarboxylic acid cycle; (S)-malate from fumarate: step 1/1. Functionally, involved in the TCA cycle. Catalyzes the stereospecific interconversion of fumarate to L-malate. In Escherichia coli O6:H1 (strain CFT073 / ATCC 700928 / UPEC), this protein is Fumarate hydratase class II.